The sequence spans 347 residues: Heat-inducible transcription repressor HrcA (347 aa).

It belongs to the HrcA family.

Negative regulator of class I heat shock genes (grpE-dnaK-dnaJ and groELS operons). Prevents heat-shock induction of these operons. The chain is Heat-inducible transcription repressor HrcA from Lactobacillus delbrueckii subsp. bulgaricus (strain ATCC BAA-365 / Lb-18).